A 522-amino-acid chain; its full sequence is Response regulator mcs4 (522 aa).

Residues 148–274 (DSLESPVSAP…RSISHSSLYT (127 aa)) form a disordered region. The span at 174–194 (NLRNASRTRSHQTLPSSNVNK) shows a compositional bias: polar residues. Basic and acidic residues predominate over residues 244 to 255 (RSDESTAEKLAK). A compositionally biased stretch (polar residues) spans 260 to 274 (TPTNSRSISHSSLYT). Residues 363 to 505 (NVLIVEDNII…WLEKKITEWG (143 aa)) form the Response regulatory domain. Asp-412 is modified (4-aspartylphosphate).

It is found in the cytoplasm. Functionally, response regulator that coordinately controls the stress activated wak1-wis1-sty1 MAP kinase pathway and fission yeast cell cycle. This chain is Response regulator mcs4 (mcs4), found in Schizosaccharomyces pombe (strain 972 / ATCC 24843) (Fission yeast).